Consider the following 388-residue polypeptide: L-lactate dehydrogenase (388 aa).

The FMN hydroxy acid dehydrogenase domain maps to 1-380 (MIISSSSDYR…SRDSLVREIE (380 aa)). Residue Y24 coordinates substrate. FMN is bound by residues S106 and Q127. Y129 is a binding site for substrate. Residue T155 coordinates FMN. Residue R164 participates in substrate binding. K251 serves as a coordination point for FMN. Residue H275 is the Proton acceptor of the active site. Residue R278 coordinates substrate. 306-330 (DSGIRSGLDVVRMLAQGADGVLLGR) provides a ligand contact to FMN.

This sequence belongs to the FMN-dependent alpha-hydroxy acid dehydrogenase family. FMN is required as a cofactor.

The protein localises to the cell inner membrane. It catalyses the reaction (S)-lactate + A = pyruvate + AH2. Its function is as follows. Catalyzes the conversion of L-lactate to pyruvate. Is coupled to the respiratory chain. The sequence is that of L-lactate dehydrogenase from Xanthobacter autotrophicus (strain ATCC BAA-1158 / Py2).